A 152-amino-acid chain; its full sequence is Transcriptional regulator MraZ (152 aa).

2 SpoVT-AbrB domains span residues 5–52 and 81–124; these read ASAI…PIHE and AHEV…DEQA.

It belongs to the MraZ family. As to quaternary structure, forms oligomers.

It localises to the cytoplasm. The protein localises to the nucleoid. In Shewanella oneidensis (strain ATCC 700550 / JCM 31522 / CIP 106686 / LMG 19005 / NCIMB 14063 / MR-1), this protein is Transcriptional regulator MraZ.